We begin with the raw amino-acid sequence, 429 residues long: Ribonuclease E/G-like protein (429 aa).

Residues D290 and D332 each contribute to the Mg(2+) site.

Belongs to the RNase E/G family. Mg(2+) serves as cofactor.

The protein localises to the plastid. The protein resides in the chloroplast stroma. Its function is as follows. Involved in intercistronic processing of primary transcripts from chloroplast operons. The endonucleolytic activity of the enzyme depends on the number of phosphates at the 5' end, is inhibited by structured RNA, and preferentially cleaves A/U-rich sequences. This is Ribonuclease E/G-like protein (rne) from Guillardia theta (Cryptophyte).